Consider the following 375-residue polypeptide: Dual specificity protein phosphatase 4 (375 aa).

The 119-residue stretch at 25-143 folds into the Rhodanese domain; the sequence is SGGRCLLLDC…FASEYPEFCA (119 aa). Residues 176–317 form the Tyrosine-protein phosphatase domain; it reads GPVEILPFLY…LLQFESQVLA (142 aa). Cys261 (phosphocysteine intermediate) is an active-site residue.

It belongs to the protein-tyrosine phosphatase family. Non-receptor class dual specificity subfamily.

The protein resides in the nucleus. The enzyme catalyses O-phospho-L-tyrosyl-[protein] + H2O = L-tyrosyl-[protein] + phosphate. It carries out the reaction O-phospho-L-seryl-[protein] + H2O = L-seryl-[protein] + phosphate. It catalyses the reaction O-phospho-L-threonyl-[protein] + H2O = L-threonyl-[protein] + phosphate. In terms of biological role, regulates mitogenic signal transduction by dephosphorylating both Thr and Tyr residues on MAP kinases ERK1 and ERK2. In Gallus gallus (Chicken), this protein is Dual specificity protein phosphatase 4 (DUSP4).